A 530-amino-acid polypeptide reads, in one-letter code: Autoinducer-2 kinase (530 aa).

Belongs to the FGGY kinase family.

Its subcellular location is the cytoplasm. The enzyme catalyses (S)-4,5-dihydroxypentane-2,3-dione + ATP = (2S)-2-hydroxy-3,4-dioxopentyl phosphate + ADP + H(+). Its function is as follows. Catalyzes the phosphorylation of autoinducer-2 (AI-2) to phospho-AI-2, which subsequently inactivates the transcriptional regulator LsrR and leads to the transcription of the lsr operon. Phosphorylates the ring-open form of (S)-4,5-dihydroxypentane-2,3-dione (DPD), which is the precursor to all AI-2 signaling molecules, at the C5 position. The chain is Autoinducer-2 kinase from Yersinia pseudotuberculosis serotype O:3 (strain YPIII).